The sequence spans 285 residues: 2-dehydro-3-deoxyphosphooctonate aldolase (285 aa).

It belongs to the KdsA family.

The protein resides in the cytoplasm. The enzyme catalyses D-arabinose 5-phosphate + phosphoenolpyruvate + H2O = 3-deoxy-alpha-D-manno-2-octulosonate-8-phosphate + phosphate. It participates in carbohydrate biosynthesis; 3-deoxy-D-manno-octulosonate biosynthesis; 3-deoxy-D-manno-octulosonate from D-ribulose 5-phosphate: step 2/3. Its pathway is bacterial outer membrane biogenesis; lipopolysaccharide biosynthesis. The polypeptide is 2-dehydro-3-deoxyphosphooctonate aldolase (Bordetella parapertussis (strain 12822 / ATCC BAA-587 / NCTC 13253)).